The following is a 122-amino-acid chain: Putative ankyrin repeat protein L22 (122 aa).

ANK repeat units lie at residues 3 to 32, 33 to 62, 63 to 92, and 94 to 122; these read DNNY…DIKA, DDDY…DIRV, NNDY…NIRA, and DDYA…VLNQ.

This Acanthamoeba polyphaga (Amoeba) protein is Putative ankyrin repeat protein L22.